A 706-amino-acid polypeptide reads, in one-letter code: Parasporal crystal protein Cry18Aa (706 aa).

Belongs to the delta endotoxin family.

Its function is as follows. Binds to the brush border membrane vesicles of scarab larvae and somehow damages the gut wall to allow the vegetative cells of P.popilliae to enter the hemolymph. Active on M.melolontha. In Paenibacillus popilliae (Bacillus popilliae), this protein is Parasporal crystal protein Cry18Aa (cry18Aa).